Reading from the N-terminus, the 601-residue chain is ATP-dependent RNA helicase DeaD (601 aa).

The Q motif motif lies at 6-34; it reads STFSFLGLNPFIIKSLSKMGYVKPSPIQA. The Helicase ATP-binding domain occupies 37-208; the sequence is IPLLLEGRDV…KRFMKNPQEI (172 aa). 50-57 contributes to the ATP binding site; sequence AQTGSGKT. A DEAD box motif is present at residues 156 to 159; it reads DEAD. Residues 231–378 enclose the Helicase C-terminal domain; it reads KTDALIRFLE…EVQLPKIEVL (148 aa). Positions 564-581 are enriched in basic and acidic residues; it reads SIFNKDKNNKRRFSDNRL. The interval 564-601 is disordered; sequence SIFNKDKNNKRRFSDNRLNKSSSIKNETKSSFFRRKSV. The segment covering 582–594 has biased composition (polar residues); sequence NKSSSIKNETKSS.

It belongs to the DEAD box helicase family. DeaD/CsdA subfamily.

It is found in the cytoplasm. It catalyses the reaction ATP + H2O = ADP + phosphate + H(+). In terms of biological role, DEAD-box RNA helicase involved in various cellular processes at low temperature, including ribosome biogenesis, mRNA degradation and translation initiation. This is ATP-dependent RNA helicase DeaD from Buchnera aphidicola subsp. Schizaphis graminum (strain Sg).